Reading from the N-terminus, the 272-residue chain is Putative phosphoenolpyruvate synthase regulatory protein (272 aa).

Residue 152 to 159 (GVSRCGKT) participates in ADP binding.

The protein belongs to the pyruvate, phosphate/water dikinase regulatory protein family. PSRP subfamily.

The enzyme catalyses [pyruvate, water dikinase] + ADP = [pyruvate, water dikinase]-phosphate + AMP + H(+). It catalyses the reaction [pyruvate, water dikinase]-phosphate + phosphate + H(+) = [pyruvate, water dikinase] + diphosphate. Bifunctional serine/threonine kinase and phosphorylase involved in the regulation of the phosphoenolpyruvate synthase (PEPS) by catalyzing its phosphorylation/dephosphorylation. In Pseudomonas putida (strain W619), this protein is Putative phosphoenolpyruvate synthase regulatory protein.